A 606-amino-acid chain; its full sequence is Large subunit GTPase 1 homolog (606 aa).

A disordered region spans residues 1-21 (MGKKNKGGAPNLGRQLIKDRF). The 231-residue stretch at 165 to 395 (WRQLWRVVER…LCDCPGLVMP (231 aa)) folds into the CP-type G domain. 213-216 (NKSD) is a binding site for GTP. Phosphoserine is present on residues Ser-276 and Ser-279. GTP-binding positions include 344–351 (GYPNVGKS) and 388–391 (DCPG). A disordered region spans residues 574–606 (LVAGNDPAAKPWRHVKKERREKLRKKFSHLDEH). The segment covering 584-600 (PWRHVKKERREKLRKKF) has biased composition (basic residues).

This sequence belongs to the TRAFAC class YlqF/YawG GTPase family. LSG1 subfamily. Expressed in larval serotonergic neurons.

It is found in the cytoplasm. GTPase required for the nuclear export of the 60S ribosomal subunit. Probably acts by mediating the release of Nmd3 from the 60S ribosomal subunit after export into the cytoplasm. Regulator of body size; acts in serotonergic neurons to regulate insulin signaling and thus exerts global growth control. This chain is Large subunit GTPase 1 homolog (Ns3), found in Drosophila melanogaster (Fruit fly).